The following is a 114-amino-acid chain: Putative antiporter subunit mnhC2 (114 aa).

Transmembrane regions (helical) follow at residues 3 to 23 (LILL…ILSI), 28 to 48 (IVIG…SMGT), and 72 to 92 (AIVL…LVLV).

It belongs to the CPA3 antiporters (TC 2.A.63) subunit C family. As to quaternary structure, may form a heterooligomeric complex that consists of seven subunits: mnhA2, mnhB2, mnhC2, mnhD2, mnhE2, mnhF2 and mnhG2.

It localises to the cell membrane. The chain is Putative antiporter subunit mnhC2 (mnhC2) from Staphylococcus aureus (strain MRSA252).